The sequence spans 72 residues: Large ribosomal subunit protein bL31 (72 aa).

Positions 16, 18, 38, and 41 each coordinate Zn(2+).

This sequence belongs to the bacterial ribosomal protein bL31 family. Type A subfamily. In terms of assembly, part of the 50S ribosomal subunit. The cofactor is Zn(2+).

Binds the 23S rRNA. In Vibrio atlanticus (strain LGP32) (Vibrio splendidus (strain Mel32)), this protein is Large ribosomal subunit protein bL31.